A 486-amino-acid chain; its full sequence is UDP-N-acetylmuramate--L-alanine ligase (486 aa).

126–132 (GTHGKTS) is a binding site for ATP.

The protein belongs to the MurCDEF family.

The protein localises to the cytoplasm. It carries out the reaction UDP-N-acetyl-alpha-D-muramate + L-alanine + ATP = UDP-N-acetyl-alpha-D-muramoyl-L-alanine + ADP + phosphate + H(+). Its pathway is cell wall biogenesis; peptidoglycan biosynthesis. Cell wall formation. The polypeptide is UDP-N-acetylmuramate--L-alanine ligase (Corynebacterium glutamicum (strain ATCC 13032 / DSM 20300 / JCM 1318 / BCRC 11384 / CCUG 27702 / LMG 3730 / NBRC 12168 / NCIMB 10025 / NRRL B-2784 / 534)).